A 401-amino-acid polypeptide reads, in one-letter code: Aspartate aminotransferase, mitochondrial (401 aa).

Position 19 is a phosphothreonine (T19). The residue at position 30 (K30) is an N6-acetyllysine. G36 serves as a coordination point for substrate. K44 is modified (N6-acetyllysine; alternate). Position 44 is an N6-succinyllysine; alternate (K44). Residue K53 is modified to N6-acetyllysine. K61 carries the N6-acetyllysine; alternate modification. The residue at position 61 (K61) is an N6-succinyllysine; alternate. The residue at position 67 (Y67) is a 3'-nitrotyrosine; alternate. Y67 carries the post-translational modification Phosphotyrosine; alternate. 3 positions are modified to N6-acetyllysine; alternate: K78, K93, and K130. N6-succinyllysine; alternate occurs at positions 78, 93, and 130. Residue W133 participates in substrate binding. K156 is subject to N6-acetyllysine; alternate. K156 is modified (N6-succinyllysine; alternate). N186 contributes to the substrate binding site. K198 is modified (N6-succinyllysine). K205 is modified (N6-acetyllysine). An N6-acetyllysine; alternate mark is found at K250 and K267. The residue at position 250 (K250) is an N6-(pyridoxal phosphate)lysine; alternate. K267 carries the post-translational modification N6-succinyllysine; alternate. Residue K273 is modified to N6-acetyllysine. N6-acetyllysine; alternate is present on K280. The residue at position 280 (K280) is an N6-succinyllysine; alternate. R284 carries the post-translational modification Asymmetric dimethylarginine. N6-acetyllysine; alternate is present on K309. Position 309 is an N6-succinyllysine; alternate (K309). K316 is subject to N6-acetyllysine. Residue K334 is modified to N6-acetyllysine; alternate. The residue at position 334 (K334) is an N6-succinyllysine; alternate. 2 positions are modified to N6-acetyllysine: K335 and K358. K367 and K375 each carry N6-acetyllysine; alternate. An N6-succinyllysine; alternate mark is found at K367 and K375. R378 provides a ligand contact to substrate.

The protein belongs to the class-I pyridoxal-phosphate-dependent aminotransferase family. Homodimer. It depends on pyridoxal 5'-phosphate as a cofactor.

It localises to the mitochondrion matrix. Its subcellular location is the cell membrane. The catalysed reaction is L-aspartate + 2-oxoglutarate = oxaloacetate + L-glutamate. It carries out the reaction L-kynurenine + 2-oxoglutarate = kynurenate + L-glutamate + H2O. In terms of biological role, catalyzes the irreversible transamination of the L-tryptophan metabolite L-kynurenine to form kynurenic acid (KA). As a member of the malate-aspartate shuttle, it has a key role in the intracellular NAD(H) redox balance. Is important for metabolite exchange between mitochondria and cytosol, and for amino acid metabolism. Facilitates cellular uptake of long-chain free fatty acids. The protein is Aspartate aminotransferase, mitochondrial (GOT2) of Equus caballus (Horse).